Here is a 189-residue protein sequence, read N- to C-terminus: Elongation factor P (189 aa).

Lys-34 bears the N6-(3,6-diaminohexanoyl)-5-hydroxylysine mark.

The protein belongs to the elongation factor P family. Post-translationally, may be beta-lysylated on the epsilon-amino group of Lys-34 by the combined action of EpmA and EpmB, and then hydroxylated on the C5 position of the same residue by EpmC (if this protein is present). Lysylation is critical for the stimulatory effect of EF-P on peptide-bond formation. The lysylation moiety may extend toward the peptidyltransferase center and stabilize the terminal 3-CCA end of the tRNA. Hydroxylation of the C5 position on Lys-34 may allow additional potential stabilizing hydrogen-bond interactions with the P-tRNA.

It localises to the cytoplasm. It functions in the pathway protein biosynthesis; polypeptide chain elongation. Functionally, involved in peptide bond synthesis. Alleviates ribosome stalling that occurs when 3 or more consecutive Pro residues or the sequence PPG is present in a protein, possibly by augmenting the peptidyl transferase activity of the ribosome. Modification of Lys-34 is required for alleviation. The polypeptide is Elongation factor P (Buchnera aphidicola subsp. Acyrthosiphon pisum (strain APS) (Acyrthosiphon pisum symbiotic bacterium)).